Consider the following 410-residue polypeptide: Protein ea47 (410 aa).

This is Protein ea47 (ea47) from Escherichia coli (Bacteriophage lambda).